The chain runs to 59 residues: Large ribosomal subunit protein bL32 (59 aa).

The interval 1–22 (MAVQQNKKSPSKRGMHRSHDFL) is disordered.

Belongs to the bacterial ribosomal protein bL32 family.

The polypeptide is Large ribosomal subunit protein bL32 (Thiobacillus denitrificans (strain ATCC 25259 / T1)).